A 226-amino-acid polypeptide reads, in one-letter code: RNA annealing protein YRA1 (226 aa).

Positions 1–62 (MSANLDKSLD…PIRKNTRAPP (62 aa)) are disordered. Serine 2 is subject to N-acetylserine. Residues serine 8 and serine 100 each carry the phosphoserine modification. In terms of domain architecture, RRM spans 78–158 (VKVNVEGLPR…SRLRLNLIVD (81 aa)). Residues 173 to 226 (AMPQKGGNAPRPVKRGPNRKAAMAKSQNKPKREKPAKKSLEDLDKEMADYFEKK) form a disordered region. Residues 208–226 (AKKSLEDLDKEMADYFEKK) are compositionally biased toward basic and acidic residues.

In terms of assembly, component of the transcription/export (TREX) complex, which is at least is formed of SUB2, TEX1 and YRA1 and the THO complex composed of HPR1, MFT1, THO2 and THP1. Interacts with RDS3 and YRA2.

It localises to the nucleus. In terms of biological role, RNA-binding RNA annealing protein. May have a role in pre-mRNA metabolism. Component the TREX complex, which operates in coupling transcription elongation to mRNA export. This Saccharomyces cerevisiae (strain ATCC 204508 / S288c) (Baker's yeast) protein is RNA annealing protein YRA1 (YRA1).